The chain runs to 314 residues: L-lactate dehydrogenase 2 (314 aa).

Residues Val-16, Asp-37, Lys-42, Tyr-68, and 82 to 83 (GL) each bind NAD(+). Substrate-binding positions include Gln-85, Arg-91, and 123–126 (NPVD). NAD(+)-binding positions include 121–123 (ATN) and Ser-146. 151–154 (DSAR) lines the substrate pocket. Residues Arg-156 and His-171 each coordinate beta-D-fructose 1,6-bisphosphate. Catalysis depends on His-178, which acts as the Proton acceptor. Position 223 is a phosphotyrosine (Tyr-223). Thr-232 serves as a coordination point for substrate.

The protein belongs to the LDH/MDH superfamily. LDH family. Homotetramer.

It localises to the cytoplasm. The catalysed reaction is (S)-lactate + NAD(+) = pyruvate + NADH + H(+). It functions in the pathway fermentation; pyruvate fermentation to lactate; (S)-lactate from pyruvate: step 1/1. Its activity is regulated as follows. Allosterically activated by fructose 1,6-bisphosphate (FBP). Functionally, catalyzes the conversion of lactate to pyruvate. This Bacillus cereus (strain ATCC 10987 / NRS 248) protein is L-lactate dehydrogenase 2.